The sequence spans 607 residues: Glutamine--fructose-6-phosphate aminotransferase [isomerizing] (607 aa).

The Nucleophile; for GATase activity role is filled by cysteine 2. The Glutamine amidotransferase type-2 domain occupies 2–217; it reads CGIIGIIGND…DGDWAVLTRN (216 aa). 2 SIS domains span residues 283–422 and 455–597; these read IGID…ARGA and VCHD…VDQP. The For Fru-6P isomerization activity role is filled by lysine 602.

Homodimer.

The protein resides in the cytoplasm. The catalysed reaction is D-fructose 6-phosphate + L-glutamine = D-glucosamine 6-phosphate + L-glutamate. In terms of biological role, catalyzes the first step in hexosamine metabolism, converting fructose-6P into glucosamine-6P using glutamine as a nitrogen source. This is Glutamine--fructose-6-phosphate aminotransferase [isomerizing] from Brucella suis biovar 1 (strain 1330).